We begin with the raw amino-acid sequence, 453 residues long: Oocyte zinc finger protein XlCOF6 (453 aa).

C2H2-type zinc fingers lie at residues 6-29 (FICS…CGKH), 67-89 (FTCT…HKTH), 95-117 (FTCM…YKAH), 123-145 (VRCT…KRLH), 151-173 (FTCT…HKTH), 179-201 (FACT…QRTH), 207-229 (FTCT…RRTH), 235-257 (FTCT…HKTH), 263-285 (FTCT…QITH), 291-313 (FTCT…HKTH), 319-341 (FACT…QRTH), 375-397 (FTCT…HKTH), 403-425 (FTCT…QRTH), and 431-453 (FTCT…RITH).

Belongs to the krueppel C2H2-type zinc-finger protein family.

It localises to the nucleus. Its function is as follows. May be involved in transcriptional regulation. This is Oocyte zinc finger protein XlCOF6 from Xenopus laevis (African clawed frog).